The primary structure comprises 420 residues: Gamma-glutamyl phosphate reductase (420 aa).

It belongs to the gamma-glutamyl phosphate reductase family.

The protein localises to the cytoplasm. It carries out the reaction L-glutamate 5-semialdehyde + phosphate + NADP(+) = L-glutamyl 5-phosphate + NADPH + H(+). The protein operates within amino-acid biosynthesis; L-proline biosynthesis; L-glutamate 5-semialdehyde from L-glutamate: step 2/2. In terms of biological role, catalyzes the NADPH-dependent reduction of L-glutamate 5-phosphate into L-glutamate 5-semialdehyde and phosphate. The product spontaneously undergoes cyclization to form 1-pyrroline-5-carboxylate. This is Gamma-glutamyl phosphate reductase from Streptococcus sanguinis (strain SK36).